Here is a 94-residue protein sequence, read N- to C-terminus: MICOS complex subunit MIC12 (94 aa).

Residues 7-23 (YGSFSVVASVLGASYYY) form a helical membrane-spanning segment.

The protein belongs to the MICOS complex subunit Mic12 family. In terms of assembly, component of the mitochondrial contact site and cristae organizing system (MICOS) complex.

Its subcellular location is the mitochondrion inner membrane. Functionally, component of the MICOS complex, a large protein complex of the mitochondrial inner membrane that plays crucial roles in the maintenance of crista junctions, inner membrane architecture, and formation of contact sites to the outer membrane. The sequence is that of MICOS complex subunit MIC12 (AIM5) from Eremothecium gossypii (strain ATCC 10895 / CBS 109.51 / FGSC 9923 / NRRL Y-1056) (Yeast).